A 734-amino-acid polypeptide reads, in one-letter code: Alpha-catulin (734 aa).

A phosphoserine mark is found at Ser374 and Ser538.

This sequence belongs to the vinculin/alpha-catenin family. Interacts with ARHGEF1. Interacts with DTNA. The interaction is required for correct localization of both CTNL1 and DTNA. In terms of tissue distribution, widely expressed. Expressed at lower level in neural tissues and at the highest level in the adrenal gland.

Its subcellular location is the cytoplasm. The protein resides in the cytoskeleton. It localises to the cell membrane. Its function is as follows. May modulate the Rho pathway signaling by providing a scaffold for the Lbc Rho guanine nucleotide exchange factor (ARHGEF1). This chain is Alpha-catulin (CTNNAL1), found in Homo sapiens (Human).